The chain runs to 186 residues: Bifunctional protein PyrR (186 aa).

Positions valine 101–threonine 113 match the PRPP-binding motif.

The protein belongs to the purine/pyrimidine phosphoribosyltransferase family. PyrR subfamily.

It catalyses the reaction UMP + diphosphate = 5-phospho-alpha-D-ribose 1-diphosphate + uracil. Functionally, regulates the transcription of the pyrimidine nucleotide (pyr) operon in response to exogenous pyrimidines. Also displays a weak uracil phosphoribosyltransferase activity which is not physiologically significant. The chain is Bifunctional protein PyrR from Syntrophobacter fumaroxidans (strain DSM 10017 / MPOB).